Here is a 1161-residue protein sequence, read N- to C-terminus: DNA-directed RNA polymerase subunit beta' (1161 aa).

The Zn(2+) site is built by Cys-60, Cys-62, Cys-75, and Cys-78. Residues Asp-449, Asp-451, and Asp-453 each coordinate Mg(2+). Zn(2+) is bound by residues Cys-790, Cys-864, Cys-871, and Cys-874.

This sequence belongs to the RNA polymerase beta' chain family. The RNAP catalytic core consists of 2 alpha, 1 beta, 1 beta' and 1 omega subunit. When a sigma factor is associated with the core the holoenzyme is formed, which can initiate transcription. It depends on Mg(2+) as a cofactor. The cofactor is Zn(2+).

The enzyme catalyses RNA(n) + a ribonucleoside 5'-triphosphate = RNA(n+1) + diphosphate. DNA-dependent RNA polymerase catalyzes the transcription of DNA into RNA using the four ribonucleoside triphosphates as substrates. The sequence is that of DNA-directed RNA polymerase subunit beta' from Clostridioides difficile (strain 630) (Peptoclostridium difficile).